We begin with the raw amino-acid sequence, 456 residues long: FAD-dependent monooxygenase sor5 (456 aa).

The chain crosses the membrane as a helical span at residues 18–38 (PLEVAIVGGGLTGLALALGLL). Residue asparagine 43 is glycosylated (N-linked (GlcNAc...) asparagine). Residues glutamate 48 and arginine 119 each contribute to the FAD site. Arginine 200 is a catalytic residue. Positions 331 and 344 each coordinate FAD.

Belongs to the paxM FAD-dependent monooxygenase family. The cofactor is FAD.

It is found in the membrane. It functions in the pathway secondary metabolite biosynthesis. Its function is as follows. FAD-dependent monooxygenase; part of the SOR gene cluster that mediates the biosynthesis of sorbicillinoids, a diverse group of yellow secondary metabolites that restrict growth of competing pathogenic fungi but not of bacteria. Sorbicillinoids biosynthesis requires the action of two PKSs. The SOR cluster is required for the production of trichodimerol and dihydrotrichotetronin, with sor2 being sufficient for production of trichodimerol, but not dihydrotrichotetronin in the light. Sor1 iteratively combines three acetyl units and the growing chain is modified by the ketoacyl reductase subunit, and optional by the enoyl reductase subunit in the second cycle. The polyketide is then handed over to the PKS sor2, which adds three more acetyl units, and two methyl groups. Sor2 releases an aldehyde, which undergoes spontaneous cyclization resulting in the formation of sorbicillin or 2',3'-dihydrosorbicillin. The monooxygenase sor5 oxidizes sorbicillin and 2',3'-dihydrosorbicillin to 2',3'-dihydrosorbicillinol and sorbicillinol, respectively. The oxidoreductase sor8 further converts sorbicillinol into oxosorbicillinol. Sorbicillinol is the building block for the other sorbicillinoids such as disorbicillinol, bisvertinolon, dihydrobisvertinolone, and dihydrotrichotetronine. This chain is FAD-dependent monooxygenase sor5, found in Hypocrea jecorina (strain QM6a) (Trichoderma reesei).